The following is a 281-amino-acid chain: MALYCVGDIQGCDDAFERLLATIGFSPSRDALYVLGDLVNRGPDSAAVLRRCITLGDSVRPLLGNHDLHLLAAAYGTRRPSRRDTLQGILLAPDRDEMLEWLRHQPLARRVHHGGGDLLMVHAGVLPQWTAEETLAYAGEVEAVLQSREFAGFLQQMYGNSPDLWSPELQGTDRLRVIVNALTRMRFCSPEGRMDFESTESASEAPPGLVPWFDAPGRRTLNTLIAFGHWSTLGWLDRADVLGLDTGCVWGGCLSAVRFGTTLADRERYHVECPQAQMPGA.

It belongs to the Ap4A hydrolase family.

The enzyme catalyses P(1),P(4)-bis(5'-adenosyl) tetraphosphate + H2O = 2 ADP + 2 H(+). Hydrolyzes diadenosine 5',5'''-P1,P4-tetraphosphate to yield ADP. The chain is Bis(5'-nucleosyl)-tetraphosphatase, symmetrical from Acidovorax sp. (strain JS42).